We begin with the raw amino-acid sequence, 492 residues long: GDP-Man:Man(3)GlcNAc(2)-PP-Dol alpha-1,2-mannosyltransferase (492 aa).

Topologically, residues 1–19 (MAAGERSWCLCKLLRFFYS) are lumenal. The helical transmembrane segment at 20-40 (LFFPGLIVCGTLCVCLVIVLW) threads the bilayer. Topologically, residues 41–233 (GIRLLLQRKK…TRNPFLSKVK (193 aa)) are cytoplasmic. An intramembrane region (helical) is located at residues 234–254 (LIYYYLFAFIYGLVGSCSDVV). At 255 to 399 (MVNSSWTLNH…IGLHTMWNEH (145 aa)) the chain is on the cytoplasmic side. The helical intramembrane region spans 400 to 420 (FGIGVVECMAAGTIILAHNSG). At 421-492 (GPKLDIVVPH…FLSSVEKLFK (72 aa)) the chain is on the cytoplasmic side.

The protein belongs to the glycosyltransferase group 1 family. Glycosyltransferase 4 subfamily.

Its subcellular location is the endoplasmic reticulum membrane. It catalyses the reaction an alpha-D-Man-(1-&gt;3)-[alpha-D-Man-(1-&gt;6)]-beta-D-Man-(1-&gt;4)-beta-D-GlcNAc-(1-&gt;4)-alpha-D-GlcNAc-diphospho-di-trans,poly-cis-dolichol + 2 GDP-alpha-D-mannose = an alpha-D-Man-(1-&gt;2)-alpha-D-Man-(1-&gt;2)-alpha-D-Man-(1-&gt;3)-[alpha-D-Man-(1-&gt;6)]-beta-D-Man-(1-&gt;4)-beta-D-GlcNAc-(1-&gt;4)-alpha-D-GlcNAc-diphospho-di-trans,poly-cis-dolichol + 2 GDP + 2 H(+). It functions in the pathway protein modification; protein glycosylation. Functionally, GDP-Man:Man(3)GlcNAc(2)-PP-Dol alpha-1,2-mannosyltransferase that operates in the biosynthetic pathway of dolichol-linked oligosaccharides, the glycan precursors employed in protein asparagine (N)-glycosylation. The assembly of dolichol-linked oligosaccharides begins on the cytosolic side of the endoplasmic reticulum membrane and finishes in its lumen. The sequential addition of sugars to dolichol pyrophosphate produces dolichol-linked oligosaccharides containing fourteen sugars, including two GlcNAcs, nine mannoses and three glucoses. Once assembled, the oligosaccharide is transferred from the lipid to nascent proteins by oligosaccharyltransferases. Catalyzes, on the cytoplasmic face of the endoplasmic reticulum, the addition of the fourth and fifth mannose residues to the dolichol-linked oligosaccharide chain, to produce Man(5)GlcNAc(2)-PP-dolichol core oligosaccharide. Man(5)GlcNAc(2)-PP-dolichol is a substrate for ALG3, the following enzyme in the biosynthetic pathway. The protein is GDP-Man:Man(3)GlcNAc(2)-PP-Dol alpha-1,2-mannosyltransferase of Homo sapiens (Human).